Consider the following 405-residue polypeptide: Pyruvate decarboxylase 2 (405 aa).

The interval 232 to 314 (DSWFNCQKLK…FLINNGGYTI (83 aa)) is thiamine pyrophosphate binding. Asp-282, Asn-309, and Gly-311 together coordinate Mg(2+). Substrate is bound at residue Glu-315.

It belongs to the TPP enzyme family. Homotetramer. A metal cation is required as a cofactor. Requires thiamine diphosphate as cofactor.

It carries out the reaction a 2-oxocarboxylate + H(+) = an aldehyde + CO2. This is Pyruvate decarboxylase 2 (PDC2) from Pisum sativum (Garden pea).